The chain runs to 464 residues: NADH dehydrogenase [ubiquinone] flavoprotein 1, mitochondrial (464 aa).

The N-terminal 20 residues, Met1 to Phe20, are a transit peptide targeting the mitochondrion. Lys81 is subject to N6-acetyllysine; alternate. Position 81 is an N6-succinyllysine; alternate (Lys81). Gly87–Gly96 serves as a coordination point for NADH. An N6-acetyllysine modification is found at Lys104. Position 199 to 247 (Arg199 to Thr247) interacts with FMN. At Arg257 the chain carries Omega-N-methylarginine. Lys375 bears the N6-acetyllysine mark. The [4Fe-4S] cluster site is built by Cys379, Cys382, Cys385, and Cys425.

It belongs to the complex I 51 kDa subunit family. Core subunit of respiratory chain NADH dehydrogenase (Complex I) which is composed of 45 different subunits. This is a component of the flavoprotein-sulfur (FP) fragment of the enzyme. Interacts with RAB5IF. FMN is required as a cofactor. Requires [4Fe-4S] cluster as cofactor.

It localises to the mitochondrion inner membrane. It carries out the reaction a ubiquinone + NADH + 5 H(+)(in) = a ubiquinol + NAD(+) + 4 H(+)(out). Functionally, core subunit of the mitochondrial membrane respiratory chain NADH dehydrogenase (Complex I) which catalyzes electron transfer from NADH through the respiratory chain, using ubiquinone as an electron acceptor. Part of the peripheral arm of the enzyme, where the electrons from NADH are accepted by flavin mononucleotide (FMN) and then passed along a chain of iron-sulfur clusters by electron tunnelling to the final acceptor ubiquinone. Contains FMN, which is the initial electron acceptor as well as one iron-sulfur cluster. The chain is NADH dehydrogenase [ubiquinone] flavoprotein 1, mitochondrial from Macaca fascicularis (Crab-eating macaque).